The chain runs to 298 residues: MPALDHPLIDQFLDALWLEKGLSDNTRVSYRSDLALFNGWLQEHSVSLPDAGRDLILDHLAWRLDQGYKPRSTARFLSGLRGFFRYLLREKLVAIDPTLQVDMPQLGKPLPKSLSEADVEALLQAPDLGEAIGQRDRAMLEVLYACGLRVTELVSLTLDQVNLRQGVLRVMGKGSKERLVPMGEEAVVWLERYQRDGRAELLNGRPSDVLFPSQRGEQMTRQTFWHRIKHHARVAGIDKPLSPHTLRHAFATHLLNHGADLRVVQMLLGHSDLSTTQIYTHVAKARLQQLHAQHHPRG.

The Core-binding (CB) domain maps to 3 to 88 (ALDHPLIDQF…GLRGFFRYLL (86 aa)). The Tyr recombinase domain maps to 109–292 (PLPKSLSEAD…AKARLQQLHA (184 aa)). Active-site residues include Arg149, Lys173, His244, Arg247, and His270. Catalysis depends on Tyr279, which acts as the O-(3'-phospho-DNA)-tyrosine intermediate.

The protein belongs to the 'phage' integrase family. XerD subfamily. In terms of assembly, forms a cyclic heterotetrameric complex composed of two molecules of XerC and two molecules of XerD.

It is found in the cytoplasm. Site-specific tyrosine recombinase, which acts by catalyzing the cutting and rejoining of the recombining DNA molecules. The XerC-XerD complex is essential to convert dimers of the bacterial chromosome into monomers to permit their segregation at cell division. It also contributes to the segregational stability of plasmids. This is Tyrosine recombinase XerD from Pseudomonas putida (strain ATCC 47054 / DSM 6125 / CFBP 8728 / NCIMB 11950 / KT2440).